Consider the following 60-residue polypeptide: MPKIEVKDGDLELALRKFKRVASETKRSFLKHEYHLRKGVKRREKEKAARKRLQKKHRMY.

Residues 38 to 60 (KGVKRREKEKAARKRLQKKHRMY) form a disordered region.

It belongs to the bacterial ribosomal protein bS21 family.

This is Small ribosomal subunit protein bS21 from Mycoplasmoides gallisepticum (strain R(low / passage 15 / clone 2)) (Mycoplasma gallisepticum).